We begin with the raw amino-acid sequence, 203 residues long: DNA-directed RNA polymerase subunit gamma (203 aa).

4 residues coordinate Zn(2+): Cys-34, Cys-36, Cys-49, and Cys-52.

It belongs to the RNA polymerase beta' chain family. RpoC1 subfamily. As to quaternary structure, in cyanobacteria the RNAP catalytic core is composed of 2 alpha, 1 beta, 1 beta', 1 gamma and 1 omega subunit. When a sigma factor is associated with the core the holoenzyme is formed, which can initiate transcription. Requires Zn(2+) as cofactor.

It carries out the reaction RNA(n) + a ribonucleoside 5'-triphosphate = RNA(n+1) + diphosphate. DNA-dependent RNA polymerase catalyzes the transcription of DNA into RNA using the four ribonucleoside triphosphates as substrates. The protein is DNA-directed RNA polymerase subunit gamma (rpoC1) of Prochlorothrix hollandica.